Here is a 335-residue protein sequence, read N- to C-terminus: Serpentine receptor class alpha-13 (335 aa).

Residues 1–22 (MAIVSSENRTCADEKLLALYQS) are Extracellular-facing. Residues 23–43 (WSYIASIVFNCLVPTISTYFL) traverse the membrane as a helical segment. At 44–61 (GRAIFQLCNQATIQYSTR) the chain is on the cytoplasmic side. Residues 62 to 82 (ILLIATILFAACHQVSYFAFK) traverse the membrane as a helical segment. The Extracellular portion of the chain corresponds to 83-107 (IDLLHTMFFKLDQPCFLQRSSYDCR). Residues 108–128 (FISIAQTTGVVGMALTGLAMS) form a helical membrane-spanning segment. Residues 129–149 (TDRALALTFPADYHKLKSVPR) lie on the Cytoplasmic side of the membrane. The helical transmembrane segment at 150–170 (VVLSVFVFIVSFSTWFLLTMN) threads the bilayer. Residues 171–192 (DPLTGYLNHCGFYPSYSVANFQ) are Extracellular-facing. The chain crosses the membrane as a helical span at residues 193–213 (LMLDVILYLAIFNLIWDVILF). Residues 214–235 (YYARQQILWRRSYQFQKRYEAR) lie on the Cytoplasmic side of the membrane. Residues 236-255 (ISLNCTQAVFVISICQCISN) traverse the membrane as a helical segment. The Extracellular segment spans residues 256-278 (GANSGLMRLLMMIGTSITSVTYS). The chain crosses the membrane as a helical span at residues 279 to 299 (SLLSLFYTAPYSCILLPILMM). The Cytoplasmic segment spans residues 300 to 335 (RISEYIREQRTIGILSLRSEKPGLEEHHQRMRAAWS).

This sequence belongs to the nematode receptor-like protein sra family.

Its subcellular location is the membrane. Its function is as follows. Chemosensory receptor that negatively regulates RAS/MAPK signaling during vulva induction and the negative regulation of olfaction of volitile attractants. Required for the suppression of vulval induction in response to food starvation. Signaling acts through the GPA-5 G-alpha protein subunit. The polypeptide is Serpentine receptor class alpha-13 (Caenorhabditis briggsae).